The following is a 1020-amino-acid chain: Mediator of RNA polymerase II transcription subunit 16 (1020 aa).

It belongs to the Mediator complex subunit 16 family. In terms of assembly, component of the Mediator complex.

It localises to the nucleus. Its function is as follows. Component of the Mediator complex, a coactivator involved in the regulated transcription of nearly all RNA polymerase II-dependent genes. Mediator functions as a bridge to convey information from gene-specific regulatory proteins to the basal RNA polymerase II transcription machinery. Mediator is recruited to promoters by direct interactions with regulatory proteins and serves as a scaffold for the assembly of a functional preinitiation complex with RNA polymerase II and the general transcription factors. This Scheffersomyces stipitis (strain ATCC 58785 / CBS 6054 / NBRC 10063 / NRRL Y-11545) (Yeast) protein is Mediator of RNA polymerase II transcription subunit 16 (SIN4).